The sequence spans 188 residues: uncharacterized protein (188 aa).

Residues Pro133 to Arg153 are disordered.

It belongs to the IS150/IS1296 orfA family.

This is an uncharacterized protein from Haemophilus influenzae (strain ATCC 51907 / DSM 11121 / KW20 / Rd).